The primary structure comprises 367 residues: Aflatoxin B1 aldehyde reductase member 2 (367 aa).

The segment covering 1 to 31 has biased composition (low complexity); the sequence is MLRAASRAVGRAAVRSAQRSGTSVGRPLAMS. Residues 1 to 45 form a disordered region; sequence MLRAASRAVGRAAVRSAQRSGTSVGRPLAMSRPPPPRAASGAPLR. Residues 1 to 46 constitute a mitochondrion transit peptide; the sequence is MLRAASRAVGRAAVRSAQRSGTSVGRPLAMSRPPPPRAASGAPLRP. Ser-40 bears the Phosphoserine mark. Thr-48 is subject to Phosphothreonine. Asp-80 serves as a coordination point for NADP(+). Residue Tyr-85 is the Proton donor of the active site. The residue at position 136 (Lys-136) is an N6-acetyllysine. His-149 is a substrate binding site. NADP(+)-binding positions include 179–180, Gln-205, 234–244, and Arg-258; these read SN and NPLAGGLLTGK. N6-succinyllysine is present on Lys-244. Residues Tyr-268 and Arg-271 each contribute to the substrate site. 326–334 provides a ligand contact to NADP(+); the sequence is SSLEQLEQN. Position 367 (Arg-367) interacts with substrate.

This sequence belongs to the aldo/keto reductase family. Aldo/keto reductase 2 subfamily. Homodimer. Expressed in liver, kidney, testis and brain with low levels in skeletal muscle, spleen, heart and lung.

The protein localises to the mitochondrion. It localises to the golgi apparatus. The protein resides in the cytoplasm. The catalysed reaction is 4-hydroxybutanoate + NADP(+) = succinate semialdehyde + NADPH + H(+). Its activity is regulated as follows. Inhibited by citrate, succinate and tartrate. Its function is as follows. Catalyzes the NADPH-dependent reduction of succinic semialdehyde to gamma-hydroxybutyrate. May have an important role in producing the neuromodulator gamma-hydroxybutyrate (GHB). Has broad substrate specificity. Can reduce the dialdehyde protein-binding form of aflatoxin B1 (AFB1) to the non-binding AFB1 dialcohol. May be involved in protection of liver against the toxic and carcinogenic effects of AFB1, a potent hepatocarcinogen. This chain is Aflatoxin B1 aldehyde reductase member 2, found in Mus musculus (Mouse).